We begin with the raw amino-acid sequence, 155 residues long: D-aminoacyl-tRNA deacylase (155 aa).

The Gly-cisPro motif, important for rejection of L-amino acids motif lies at 137–138 (GP).

It belongs to the DTD family. As to quaternary structure, homodimer.

It localises to the cytoplasm. It carries out the reaction glycyl-tRNA(Ala) + H2O = tRNA(Ala) + glycine + H(+). The enzyme catalyses a D-aminoacyl-tRNA + H2O = a tRNA + a D-alpha-amino acid + H(+). In terms of biological role, an aminoacyl-tRNA editing enzyme that deacylates mischarged D-aminoacyl-tRNAs. Also deacylates mischarged glycyl-tRNA(Ala), protecting cells against glycine mischarging by AlaRS. Acts via tRNA-based rather than protein-based catalysis; rejects L-amino acids rather than detecting D-amino acids in the active site. By recycling D-aminoacyl-tRNA to D-amino acids and free tRNA molecules, this enzyme counteracts the toxicity associated with the formation of D-aminoacyl-tRNA entities in vivo and helps enforce protein L-homochirality. The protein is D-aminoacyl-tRNA deacylase of Paracidovorax citrulli (strain AAC00-1) (Acidovorax citrulli).